The following is a 743-amino-acid chain: Ectonucleotide pyrophosphatase/phosphodiesterase C27A7.3 (743 aa).

Residues 1-23 are Cytoplasmic-facing; it reads MSNRVVDVNSKKTGTSWKKKLMK. A helical; Signal-anchor for type II membrane protein transmembrane segment spans residues 24-44; sequence IVIWSLAMLSFIAGLVLLGLV. The Lumenal portion of the chain corresponds to 45–743; it reads AAATISGSKN…LRRNITTSLW (699 aa). Zn(2+) is bound by residues Asp87 and Thr123. The active-site Nucleophile is the Thr123. N-linked (GlcNAc...) asparagine glycosylation occurs at Asn195. Asp243, His247, Asp286, and His287 together coordinate Zn(2+). N-linked (GlcNAc...) asparagine glycans are attached at residues Asn293 and Asn320. His383 is a Zn(2+) binding site. 3 N-linked (GlcNAc...) asparagine glycosylation sites follow: Asn406, Asn434, and Asn536. Asp635, Asn637, Asp639, Ile641, and Asp643 together coordinate Ca(2+). Residue Asn737 is glycosylated (N-linked (GlcNAc...) asparagine).

The protein belongs to the nucleotide pyrophosphatase/phosphodiesterase family. Zn(2+) serves as cofactor. It depends on Ca(2+) as a cofactor.

It is found in the membrane. In terms of biological role, probable phosphodiesterase. The sequence is that of Ectonucleotide pyrophosphatase/phosphodiesterase C27A7.3 from Caenorhabditis elegans.